The following is a 125-amino-acid chain: MAPAKKGGEKKKGRSAINEVVTREYTINIHKRIHGIGFKKRAPRALKEIRKFAVKEMRTPDVRIDTRLNKAVWAKGIRNVPYRIRVRLSRKRNEDEDSPNKLYTLVTYVPVTNYKGLQTVNVDEN.

Belongs to the eukaryotic ribosomal protein eL31 family. As to quaternary structure, component of the large ribosomal subunit.

Its subcellular location is the cytoplasm. Its function is as follows. Component of the large ribosomal subunit. The ribosome is a large ribonucleoprotein complex responsible for the synthesis of proteins in the cell. This Xenopus laevis (African clawed frog) protein is Large ribosomal subunit protein eL31 (rpl31).